The following is a 37-amino-acid chain: Large ribosomal subunit protein bL36 (37 aa).

The protein belongs to the bacterial ribosomal protein bL36 family.

In Leptothrix cholodnii (strain ATCC 51168 / LMG 8142 / SP-6) (Leptothrix discophora (strain SP-6)), this protein is Large ribosomal subunit protein bL36.